A 391-amino-acid chain; its full sequence is Ferrochelatase (391 aa).

The Fe cation site is built by H196 and E281.

It belongs to the ferrochelatase family.

The protein localises to the cytoplasm. The catalysed reaction is heme b + 2 H(+) = protoporphyrin IX + Fe(2+). The protein operates within porphyrin-containing compound metabolism; protoheme biosynthesis; protoheme from protoporphyrin-IX: step 1/1. Functionally, catalyzes the ferrous insertion into protoporphyrin IX. The chain is Ferrochelatase from Prochlorococcus marinus (strain MIT 9215).